The chain runs to 262 residues: Phosphate import ATP-binding protein PstB (262 aa).

The region spanning methionine 16–valine 257 is the ABC transporter domain. Position 48–55 (glycine 48–serine 55) interacts with ATP.

This sequence belongs to the ABC transporter superfamily. Phosphate importer (TC 3.A.1.7) family. The complex is composed of two ATP-binding proteins (PstB), two transmembrane proteins (PstC and PstA) and a solute-binding protein (PstS).

The protein localises to the cell inner membrane. It carries out the reaction phosphate(out) + ATP + H2O = ADP + 2 phosphate(in) + H(+). Part of the ABC transporter complex PstSACB involved in phosphate import. Responsible for energy coupling to the transport system. The protein is Phosphate import ATP-binding protein PstB of Anaeromyxobacter dehalogenans (strain 2CP-C).